The sequence spans 130 residues: S-adenosylmethionine decarboxylase proenzyme (130 aa).

Ser66 acts as the Schiff-base intermediate with substrate; via pyruvic acid in catalysis. Ser66 is subject to Pyruvic acid (Ser); by autocatalysis. His71 functions as the Proton acceptor; for processing activity in the catalytic mechanism. The active-site Proton donor; for catalytic activity is the Cys86.

This sequence belongs to the prokaryotic AdoMetDC family. Type 1 subfamily. As to quaternary structure, heterotetramer of two alpha and two beta chains arranged as a dimer of alpha/beta heterodimers. Pyruvate is required as a cofactor. Post-translationally, is synthesized initially as an inactive proenzyme. Formation of the active enzyme involves a self-maturation process in which the active site pyruvoyl group is generated from an internal serine residue via an autocatalytic post-translational modification. Two non-identical subunits are generated from the proenzyme in this reaction, and the pyruvate is formed at the N-terminus of the alpha chain, which is derived from the carboxyl end of the proenzyme. The post-translation cleavage follows an unusual pathway, termed non-hydrolytic serinolysis, in which the side chain hydroxyl group of the serine supplies its oxygen atom to form the C-terminus of the beta chain, while the remainder of the serine residue undergoes an oxidative deamination to produce ammonia and the pyruvoyl group blocking the N-terminus of the alpha chain.

It catalyses the reaction S-adenosyl-L-methionine + H(+) = S-adenosyl 3-(methylsulfanyl)propylamine + CO2. The protein operates within amine and polyamine biosynthesis; S-adenosylmethioninamine biosynthesis; S-adenosylmethioninamine from S-adenosyl-L-methionine: step 1/1. Functionally, catalyzes the decarboxylation of S-adenosylmethionine to S-adenosylmethioninamine (dcAdoMet), the propylamine donor required for the synthesis of the polyamines spermine and spermidine from the diamine putrescine. This Bacillus cytotoxicus (strain DSM 22905 / CIP 110041 / 391-98 / NVH 391-98) protein is S-adenosylmethionine decarboxylase proenzyme.